A 2663-amino-acid chain; its full sequence is Ankyrin repeat domain-containing protein 11 (2663 aa).

2 disordered regions span residues 1–90 (MPKG…KEPV) and 128–169 (SANS…ERGE). Basic and acidic residues-rich tracts occupy residues 21–54 (MVEK…VRER) and 69–90 (EQKD…KEPV). Residues 128–155 (SANSPVDTTPKHPSQSTVCQKGTPNSAS) are compositionally biased toward polar residues. Positions 156–169 (KTKDKVNKRNERGE) are enriched in basic and acidic residues. 4 ANK repeats span residues 167–196 (RGET…DVNV), 200–229 (AGWT…EVNT), 233–262 (DDDT…NPQQ), and 266–292 (KGET…YTSS). Phosphoserine is present on Ser276. Disordered stretches follow at residues 289–380 (YTSS…SNSF), 398–647 (APKK…GQCS), and 723–783 (DTNK…NDLK). Residues 295-305 (SSTESSEEEDA) show a composition bias toward acidic residues. Polar residues predominate over residues 309–320 (APSSSVDGNNTD). Positions 356–376 (DRVPPVDDKHLLKKDYRKETK) are enriched in basic and acidic residues. Residue Ser408 is modified to Phosphoserine. Thr410 carries the phosphothreonine modification. Ser411 is modified (phosphoserine). Basic and acidic residues predominate over residues 438 to 451 (KTREPSNAKQQKEK). Positions 452-462 (NKVKKKRKKET) are enriched in basic residues. A compositionally biased stretch (basic and acidic residues) spans 463-477 (KGREVRFGKRSDKFC). Positions 481–493 (SESESSESGEDDR) are enriched in acidic residues. The segment covering 513-531 (SLFSSLSASSTSSHGSSAA) has biased composition (low complexity). A compositionally biased stretch (basic and acidic residues) spans 539–550 (TDQHTKHWRTDN). Residues 551-562 (WKTISSPAWSEV) are compositionally biased toward polar residues. Low complexity predominate over residues 576-588 (ESDYSSEGSSVES). Composition is skewed to basic residues over residues 591–602 (PVRKRQEHRKRA) and 629–641 (VKKH…HKNK). Residue Ser834 is modified to Phosphoserine. Composition is skewed to basic and acidic residues over residues 881–928 (VKED…EKHK), 935–1043 (SEKD…KSIL), 1059–1090 (KKDT…KEKA), and 1099–1112 (FSEK…KEKS). Disordered regions lie at residues 881 to 1043 (VKED…KSIL) and 1059 to 1393 (KKDT…GQYE). Ser1079 is modified (phosphoserine). Residue Thr1120 is modified to Phosphothreonine. The residue at position 1123 (Ser1123) is a Phosphoserine. Composition is skewed to basic and acidic residues over residues 1142-1301 (DLPR…DKIS), 1330-1347 (GDDK…LKEK), and 1359-1393 (KSHD…GQYE). Thr1419 is subject to Phosphothreonine. Basic and acidic residues-rich tracts occupy residues 1424 to 1446 (STEK…KELK), 1466 to 1545 (REKW…KGDP), 1556 to 1574 (APSK…KLLG), 1587 to 1597 (LSQKDLEIEER), and 1605 to 1639 (MKQM…DIPA). A disordered region spans residues 1424 to 1710 (STEKKDKNDS…TGVPTPTSVL (287 aa)). Ser1509 carries the phosphoserine modification. Position 1692 is a phosphoserine (Ser1692). Residues 1698 to 1710 (SRPTGVPTPTSVL) show a composition bias toward polar residues. Residue Ser1792 is modified to Phosphoserine. A disordered region spans residues 1814 to 1836 (SVPAASSYDSPMPPSMEDRAPLP). Residue Ser1847 is modified to Phosphoserine. A phosphotyrosine mark is found at Tyr1850 and Tyr1851. Phosphoserine is present on residues Ser1852, Ser1859, and Ser1990. Disordered stretches follow at residues 1988–2019 (PESP…PAPP) and 2131–2406 (LDLG…STQQ). Composition is skewed to low complexity over residues 2310–2324 (IQPE…AEAP) and 2391–2406 (RSTQ…STQQ). Positions 2369 to 2663 (AKARGSEDDD…VNDDFVLLPA (295 aa)) are important for protein degradation.

Interacts with the PAS region of the p160 coactivators. In terms of processing, subject to proteasomal degradation which is probably essential to regulate its activity.

The protein localises to the nucleus. Its function is as follows. Chromatin regulator which modulates histone acetylation and gene expression in neural precursor cells. May recruit histone deacetylases (HDACs) to the p160 coactivators/nuclear receptor complex to inhibit ligand-dependent transactivation. Has a role in proliferation and development of cortical neural precursors. May also regulate bone homeostasis. In Homo sapiens (Human), this protein is Ankyrin repeat domain-containing protein 11 (ANKRD11).